The following is a 188-amino-acid chain: CASP-like protein 4B3 (188 aa).

Residues 1 to 21 form a disordered region; the sequence is MSFSPASSEPHDAPAAAGSSV. The Cytoplasmic segment spans residues 1 to 42; the sequence is MSFSPASSEPHDAPAAAGSSVPASRSIAERWKMEAAPIRARL. Residues 43–63 traverse the membrane as a helical segment; it reads LLRAFAWLFSLLALVVMATDV. Over 64-76 the chain is Extracellular; it reads HGRGGAQDFSTYP. The helical transmembrane segment at 77–97 threads the bilayer; it reads EYNYCLGMSIIALLYATAQLV. Residues 98–114 lie on the Cytoplasmic side of the membrane; sequence RDAHRLSSGRDLVAGRK. The helical transmembrane segment at 115-135 threads the bilayer; sequence AAAVVDFAGDQVVAYSLISGL. Topologically, residues 136–156 are extracellular; sequence SAAAPVTDYMRQATDNLFNDS. N-linked (GlcNAc...) asparagine glycosylation is present at asparagine 154. The chain crosses the membrane as a helical span at residues 157 to 177; that stretch reads AAAAISLAFFAFLAISLSALI. The Cytoplasmic portion of the chain corresponds to 178–188; it reads SGYNLSLEAIV.

Belongs to the Casparian strip membrane proteins (CASP) family. Homodimer and heterodimers.

It localises to the cell membrane. The sequence is that of CASP-like protein 4B3 from Hordeum vulgare subsp. vulgare (Domesticated barley).